The sequence spans 1096 residues: Lysine-specific demethylase 4B (1096 aa).

In terms of domain architecture, JmjN spans 15-57; it reads IMTFRPTMEEFKDFNKYVAYIESQGAHRAGLAKIIPPKEWKPR. A 2-oxoglutarate-binding site is contributed by Tyr-133. The JmjC domain occupies 146-309; the sequence is VAQWNIGSLR…YGKVATQCTC (164 aa). Fe cation-binding residues include His-189 and Glu-191. Residues Asn-199 and Lys-207 each contribute to the 2-oxoglutarate site. The Zn(2+) site is built by Cys-235 and His-241. Lys-242 contributes to the 2-oxoglutarate binding site. His-277 contacts Fe cation. The Zn(2+) site is built by Cys-307 and Cys-309. Residues 369 to 382 show a composition bias toward basic residues; sequence LLRRSHRKRSQPKK. Disordered stretches follow at residues 369–478 and 557–649; these read LLRR…SEEA and KGPT…VSDP. Over residues 391–406 the composition is skewed to low complexity; the sequence is PGEGTAGAALLEEAGG. The span at 413–425 shows a compositional bias: acidic residues; it reads GPEVDPEEEEEEP. A compositionally biased stretch (basic and acidic residues) spans 430-443; it reads HGREAEGAEEDGRG. Positions 444–458 are enriched in basic residues; sequence KLRPTKAKSERKKKS. Ser-566 bears the Phosphoserine mark. Lys-602 carries the N6-acetyllysine modification. A compositionally biased stretch (acidic residues) spans 632-648; sequence SSDEEASPFSGEEDVSD. Residues 731–789 form a PHD-type 1 zinc finger; it reads MCFTSGGENTEPLPANSYIGDDGTSPLIACGKCCLQVHASCYGIRPELVNEGWTCSRCA. The C2HC pre-PHD-type zinc finger occupies 794–827; the sequence is TAECCLCNLRGGALQMTTDRRWIHVICAIAVPEA. The segment at 850–907 adopts a PHD-type 2 zinc-finger fold; the sequence is LKCVYCRKRMKKVSGACIQCSYEHCSTSFHVTCAHAAGVLMEPDDWPYVVSITCLKHK. Tudor domains follow at residues 917–974 and 975–1031; these read RAVS…CVQL and GPPS…EELP. A disordered region spans residues 1037-1073; it reads RLSLSTGAPQEPAFSGEEAKAAKRPRVGTPLATEDSG. Thr-1065 is subject to Phosphothreonine.

It belongs to the JHDM3 histone demethylase family. Fe(2+) is required as a cofactor.

It localises to the nucleus. The enzyme catalyses N(6),N(6),N(6)-trimethyl-L-lysyl(9)-[histone H3] + 2 2-oxoglutarate + 2 O2 = N(6)-methyl-L-lysyl(9)-[histone H3] + 2 formaldehyde + 2 succinate + 2 CO2. Functionally, histone demethylase that specifically demethylates 'Lys-9' of histone H3, thereby playing a role in histone code. Does not demethylate histone H3 'Lys-4', H3 'Lys-27', H3 'Lys-36' nor H4 'Lys-20'. Only able to demethylate trimethylated H3 'Lys-9', with a weaker activity than KDM4A, KDM4C and KDM4D. Demethylation of Lys residue generates formaldehyde and succinate. Plays a critical role in the development of the central nervous system (CNS). This is Lysine-specific demethylase 4B (KDM4B) from Homo sapiens (Human).